A 141-amino-acid chain; its full sequence is 15 kDa lipoprotein (141 aa).

A signal peptide spans 1-17 (MVKRGRFALCLAVLLGA). A lipid anchor (N-palmitoyl cysteine) is attached at Cys18. Cys18 carries S-diacylglycerol cysteine lipidation.

The protein resides in the cell membrane. The polypeptide is 15 kDa lipoprotein (tpp15) (Treponema pallidum (strain Nichols)).